The primary structure comprises 540 residues: Gamma-cadinene synthase (540 aa).

Residues Asp-292, Asp-296, Asp-436, Ser-440, and Glu-444 each contribute to the Mg(2+) site. The DDXXD motif motif lies at 292-296 (DDTYD).

This sequence belongs to the terpene synthase family. The cofactor is Mg(2+). Mn(2+) is required as a cofactor.

The catalysed reaction is (2E,6E)-farnesyl diphosphate = (+)-gamma-cadinene + diphosphate. The protein operates within secondary metabolite biosynthesis; terpenoid biosynthesis. Sesquiterpene synthase that catalyzes the cyclization of trans,trans-farnesyl diphosphate (FPP) to gamma cadinene. This Ocimum basilicum (Sweet basil) protein is Gamma-cadinene synthase (CDS).